Reading from the N-terminus, the 311-residue chain is MSLGTTDILQKPIAAHAHYVQSQSTDDVWKWVLDSRGKVTTTFVDVLNTSPGQVKEVIRFDVDNRNMGEAATFKTPQRTFKSVNSITKTSFKEFTFGQEVTGEFGVPYFKKLGVKLTAGQKFGENNSTLESTETTTQYGGDSITVPANKHYAIDYVFTTTNFSGKFQNKREIPGTSNIRVAGFWDPDTGTQRRSEKFLNEKTKYGVVKNLQIAYDELKNNPDQGNLFHDELLSRKNIKIHLGFTNGDDYYLKPEEVKEKILDRVYLDDDKKKVYVLEDAAEFNGQSGIDLSIKVIDRTNNTEKELPKILLF.

This is an uncharacterized protein from Bacillus anthracis.